The chain runs to 334 residues: Holliday junction branch migration complex subunit RuvB (334 aa).

The segment at 1–182 (MDKRMVDQEF…FGVHLRLEYY (182 aa)) is large ATPase domain (RuvB-L). ATP is bound by residues Leu21, Arg22, Gly63, Lys66, Thr67, Thr68, 129–131 (EDF), Arg172, Tyr182, and Arg219. Thr67 contacts Mg(2+). The small ATPAse domain (RuvB-S) stretch occupies residues 183-253 (NENDLKEIIT…TTKRALQLLQ (71 aa)). The interval 256 to 334 (QHGLDYIDHK…HFNTTNEKRE (79 aa)) is head domain (RuvB-H). Positions 292, 311, and 316 each coordinate DNA.

It belongs to the RuvB family. In terms of assembly, homohexamer. Forms an RuvA(8)-RuvB(12)-Holliday junction (HJ) complex. HJ DNA is sandwiched between 2 RuvA tetramers; dsDNA enters through RuvA and exits via RuvB. An RuvB hexamer assembles on each DNA strand where it exits the tetramer. Each RuvB hexamer is contacted by two RuvA subunits (via domain III) on 2 adjacent RuvB subunits; this complex drives branch migration. In the full resolvosome a probable DNA-RuvA(4)-RuvB(12)-RuvC(2) complex forms which resolves the HJ.

It is found in the cytoplasm. The catalysed reaction is ATP + H2O = ADP + phosphate + H(+). The RuvA-RuvB-RuvC complex processes Holliday junction (HJ) DNA during genetic recombination and DNA repair, while the RuvA-RuvB complex plays an important role in the rescue of blocked DNA replication forks via replication fork reversal (RFR). RuvA specifically binds to HJ cruciform DNA, conferring on it an open structure. The RuvB hexamer acts as an ATP-dependent pump, pulling dsDNA into and through the RuvAB complex. RuvB forms 2 homohexamers on either side of HJ DNA bound by 1 or 2 RuvA tetramers; 4 subunits per hexamer contact DNA at a time. Coordinated motions by a converter formed by DNA-disengaged RuvB subunits stimulates ATP hydrolysis and nucleotide exchange. Immobilization of the converter enables RuvB to convert the ATP-contained energy into a lever motion, pulling 2 nucleotides of DNA out of the RuvA tetramer per ATP hydrolyzed, thus driving DNA branch migration. The RuvB motors rotate together with the DNA substrate, which together with the progressing nucleotide cycle form the mechanistic basis for DNA recombination by continuous HJ branch migration. Branch migration allows RuvC to scan DNA until it finds its consensus sequence, where it cleaves and resolves cruciform DNA. The protein is Holliday junction branch migration complex subunit RuvB of Staphylococcus epidermidis (strain ATCC 35984 / DSM 28319 / BCRC 17069 / CCUG 31568 / BM 3577 / RP62A).